Consider the following 329-residue polypeptide: Probable cell division protein WhiA (329 aa).

A DNA-binding region (H-T-H motif) is located at residues 276 to 309 (SLEELGKVHEPPLTKDAIAGRIRRLLALADKTAR). The disordered stretch occupies residues 308–329 (ARSNGEPTTLESLPVEMRDDRG). The segment covering 309–318 (RSNGEPTTLE) has biased composition (polar residues).

The protein belongs to the WhiA family.

Its function is as follows. Involved in cell division and chromosome segregation. This Cutibacterium acnes (strain DSM 16379 / KPA171202) (Propionibacterium acnes) protein is Probable cell division protein WhiA.